We begin with the raw amino-acid sequence, 313 residues long: tRNA-cytidine(32) 2-sulfurtransferase (313 aa).

The short motif at 47–52 (SGGKDS) is the PP-loop motif element. [4Fe-4S] cluster is bound by residues Cys-122, Cys-125, and Cys-213.

This sequence belongs to the TtcA family. As to quaternary structure, homodimer. It depends on Mg(2+) as a cofactor. The cofactor is [4Fe-4S] cluster.

The protein localises to the cytoplasm. It carries out the reaction cytidine(32) in tRNA + S-sulfanyl-L-cysteinyl-[cysteine desulfurase] + AH2 + ATP = 2-thiocytidine(32) in tRNA + L-cysteinyl-[cysteine desulfurase] + A + AMP + diphosphate + H(+). Its pathway is tRNA modification. Its function is as follows. Catalyzes the ATP-dependent 2-thiolation of cytidine in position 32 of tRNA, to form 2-thiocytidine (s(2)C32). The sulfur atoms are provided by the cysteine/cysteine desulfurase (IscS) system. The chain is tRNA-cytidine(32) 2-sulfurtransferase from Yersinia enterocolitica serotype O:8 / biotype 1B (strain NCTC 13174 / 8081).